Here is a 142-residue protein sequence, read N- to C-terminus: Regulatory protein RecX (142 aa).

This sequence belongs to the RecX family.

The protein localises to the cytoplasm. Modulates RecA activity. This is Regulatory protein RecX from Thermus thermophilus (strain ATCC BAA-163 / DSM 7039 / HB27).